The sequence spans 352 residues: Ion-translocating oxidoreductase complex subunit D (352 aa).

Helical transmembrane passes span 20-40 (IMLL…WFFG), 42-62 (GTLF…AIVL), 69-91 (VASH…SIPP), and 123-143 (PAMI…TSWL). Residue threonine 187 is modified to FMN phosphoryl threonine. Transmembrane regions (helical) follow at residues 215–235 (LAGV…VFLL), 242–262 (WHIP…GWLF), 267–287 (LASP…FFIL), 301–321 (LIFG…GGYP), and 322–342 (DGVA…DYYT).

The protein belongs to the NqrB/RnfD family. The complex is composed of six subunits: RsxA, RsxB, RsxC, RsxD, RsxE and RsxG. FMN serves as cofactor.

The protein localises to the cell inner membrane. In terms of biological role, part of a membrane-bound complex that couples electron transfer with translocation of ions across the membrane. Required to maintain the reduced state of SoxR. The polypeptide is Ion-translocating oxidoreductase complex subunit D (Salmonella paratyphi A (strain ATCC 9150 / SARB42)).